A 276-amino-acid polypeptide reads, in one-letter code: CDP-diacylglycerol--serine O-phosphatidyltransferase (276 aa).

The tract at residues 1 to 21 is disordered; the sequence is MVESDEDFAPQEFPHTDTDVI. A phosphoserine mark is found at Ser-4, Ser-34, Ser-42, Ser-46, Ser-47, and Ser-50. Helical transmembrane passes span 82–102, 163–183, 210–230, and 248–268; these read MADY…VSCL, IAFA…FFVL, YFEG…AYCV, and QILE…GMIS.

This sequence belongs to the CDP-alcohol phosphatidyltransferase class-I family. Requires Mn(2+) as cofactor. Mg(2+) serves as cofactor.

The protein localises to the microsome membrane. The protein resides in the endoplasmic reticulum membrane. It is found in the mitochondrion outer membrane. The catalysed reaction is a CDP-1,2-diacyl-sn-glycerol + L-serine = a 1,2-diacyl-sn-glycero-3-phospho-L-serine + CMP + H(+). Its pathway is phospholipid metabolism; phosphatidylethanolamine biosynthesis; phosphatidylethanolamine from CDP-diacylglycerol: step 1/2. Functionally, catalyzes the synthesis of phosphatidylserine (PtdSer). This chain is CDP-diacylglycerol--serine O-phosphatidyltransferase (CHO1), found in Saccharomyces cerevisiae (strain ATCC 204508 / S288c) (Baker's yeast).